The following is a 618-amino-acid chain: DNA mismatch repair protein MutL (618 aa).

The segment covering 367 to 381 (EPTAAREPATPRYSG) has biased composition (low complexity). The interval 367–402 (EPTAAREPATPRYSGGASGGNGGRQSAGGWPHAQPG) is disordered. Residues 382-392 (GASGGNGGRQS) are compositionally biased toward gly residues.

It belongs to the DNA mismatch repair MutL/HexB family.

Its function is as follows. This protein is involved in the repair of mismatches in DNA. It is required for dam-dependent methyl-directed DNA mismatch repair. May act as a 'molecular matchmaker', a protein that promotes the formation of a stable complex between two or more DNA-binding proteins in an ATP-dependent manner without itself being part of a final effector complex. The protein is DNA mismatch repair protein MutL of Salmonella dublin (strain CT_02021853).